The primary structure comprises 350 residues: tRNA dimethylallyltransferase (350 aa).

34 to 41 (GPTASGKT) serves as a coordination point for ATP. 36–41 (TASGKT) serves as a coordination point for substrate. Interaction with substrate tRNA regions lie at residues 63-66 (DSAL), 187-191 (QRIQR), and 274-279 (RCVGYR).

This sequence belongs to the IPP transferase family. Monomer. The cofactor is Mg(2+).

The enzyme catalyses adenosine(37) in tRNA + dimethylallyl diphosphate = N(6)-dimethylallyladenosine(37) in tRNA + diphosphate. In terms of biological role, catalyzes the transfer of a dimethylallyl group onto the adenine at position 37 in tRNAs that read codons beginning with uridine, leading to the formation of N6-(dimethylallyl)adenosine (i(6)A). The chain is tRNA dimethylallyltransferase from Paracidovorax citrulli (strain AAC00-1) (Acidovorax citrulli).